Consider the following 235-residue polypeptide: DNA repair protein RecO (235 aa).

The protein belongs to the RecO family.

In terms of biological role, involved in DNA repair and RecF pathway recombination. This is DNA repair protein RecO from Enterobacter sp. (strain 638).